A 218-amino-acid polypeptide reads, in one-letter code: Glutathione S-transferase Mu 4 (218 aa).

The GST N-terminal domain occupies Met1 to Gly88. Glutathione contacts are provided by residues Tyr7–Trp8, Trp46–Lys50, Asn59–Leu60, and Gln72–Ser73. The region spanning Thr90 to Leu208 is the GST C-terminal domain. Tyr116 contributes to the substrate binding site.

This sequence belongs to the GST superfamily. Mu family. As to quaternary structure, homodimer. In terms of tissue distribution, widely expressed.

The protein resides in the cytoplasm. It catalyses the reaction RX + glutathione = an S-substituted glutathione + a halide anion + H(+). The enzyme catalyses 1-chloro-2,4-dinitrobenzene + glutathione = 2,4-dinitrophenyl-S-glutathione + chloride + H(+). It carries out the reaction (13S,14S)-epoxy-(4Z,7Z,9E,11E,16Z,19Z)-docosahexaenoate + glutathione = (13R)-S-glutathionyl-(14S)-hydroxy-(4Z,7Z,9E,11E,16Z,19Z)-docosahexaenoate. The catalysed reaction is leukotriene C4 = leukotriene A4 + glutathione. Functionally, conjugation of reduced glutathione to a wide number of exogenous and endogenous hydrophobic electrophiles. Catalyzes the conjugation of leukotriene A4 with reduced glutathione (GSH) to form leukotriene C4. Can also catalyze the transfer of a glutathionyl group from glutathione (GSH) to 13(S),14(S)-epoxy-docosahexaenoic acid to form maresin conjugate in tissue regeneration 1 (MCTR1), a bioactive lipid mediator that possess potent anti-inflammatory and proresolving actions. This is Glutathione S-transferase Mu 4 from Mus musculus (Mouse).